The chain runs to 57 residues: uncharacterized protein (57 aa).

Residues 4–26 form a helical membrane-spanning segment; the sequence is FMPIRVFLYSYVIINSLLSSFFH.

It localises to the membrane. This is an uncharacterized protein from Saccharomyces cerevisiae (strain ATCC 204508 / S288c) (Baker's yeast).